Consider the following 293-residue polypeptide: Ribosomal protein L11 methyltransferase (293 aa).

T145, G166, D188, and N230 together coordinate S-adenosyl-L-methionine.

This sequence belongs to the methyltransferase superfamily. PrmA family.

Its subcellular location is the cytoplasm. The catalysed reaction is L-lysyl-[protein] + 3 S-adenosyl-L-methionine = N(6),N(6),N(6)-trimethyl-L-lysyl-[protein] + 3 S-adenosyl-L-homocysteine + 3 H(+). In terms of biological role, methylates ribosomal protein L11. The sequence is that of Ribosomal protein L11 methyltransferase from Shewanella sediminis (strain HAW-EB3).